A 572-amino-acid polypeptide reads, in one-letter code: Proline--tRNA ligase (572 aa).

It belongs to the class-II aminoacyl-tRNA synthetase family. ProS type 1 subfamily. In terms of assembly, homodimer.

It is found in the cytoplasm. The enzyme catalyses tRNA(Pro) + L-proline + ATP = L-prolyl-tRNA(Pro) + AMP + diphosphate. Its function is as follows. Catalyzes the attachment of proline to tRNA(Pro) in a two-step reaction: proline is first activated by ATP to form Pro-AMP and then transferred to the acceptor end of tRNA(Pro). As ProRS can inadvertently accommodate and process non-cognate amino acids such as alanine and cysteine, to avoid such errors it has two additional distinct editing activities against alanine. One activity is designated as 'pretransfer' editing and involves the tRNA(Pro)-independent hydrolysis of activated Ala-AMP. The other activity is designated 'posttransfer' editing and involves deacylation of mischarged Ala-tRNA(Pro). The misacylated Cys-tRNA(Pro) is not edited by ProRS. This is Proline--tRNA ligase from Escherichia fergusonii (strain ATCC 35469 / DSM 13698 / CCUG 18766 / IAM 14443 / JCM 21226 / LMG 7866 / NBRC 102419 / NCTC 12128 / CDC 0568-73).